The following is a 161-amino-acid chain: MGERSSAKARLIDVELDETVGRAPPDVEHERAVAIFDLVEENTFHPVGDQAGGPYRLKISLIDSRLALSVTREGGDPVVTHMLSLTPFRRIVKDYFLVCESYYQAIRSATPSQIEAIDMGRRGLHNEGSQTLMDRLNGKIEVDFNTARRLFTLICVLHWRR.

It belongs to the UPF0262 family.

The chain is UPF0262 protein Meso_0189 from Chelativorans sp. (strain BNC1).